Consider the following 561-residue polypeptide: NADH-quinone oxidoreductase subunit C/D (561 aa).

Positions methionine 1–leucine 152 are NADH dehydrogenase I subunit C. Residues lysine 176–arginine 561 form an NADH dehydrogenase I subunit D region.

It in the N-terminal section; belongs to the complex I 30 kDa subunit family. The protein in the C-terminal section; belongs to the complex I 49 kDa subunit family. In terms of assembly, NDH-1 is composed of 13 different subunits. Subunits NuoB, CD, E, F, and G constitute the peripheral sector of the complex.

Its subcellular location is the cell inner membrane. It catalyses the reaction a quinone + NADH + 5 H(+)(in) = a quinol + NAD(+) + 4 H(+)(out). Functionally, NDH-1 shuttles electrons from NADH, via FMN and iron-sulfur (Fe-S) centers, to quinones in the respiratory chain. The immediate electron acceptor for the enzyme in this species is believed to be ubiquinone. Couples the redox reaction to proton translocation (for every two electrons transferred, four hydrogen ions are translocated across the cytoplasmic membrane), and thus conserves the redox energy in a proton gradient. This chain is NADH-quinone oxidoreductase subunit C/D, found in Campylobacter fetus subsp. fetus (strain 82-40).